The primary structure comprises 397 residues: MDLLAPLAAVILTYREVDADTLGRVGEEMKKCIEILGVKRPMFVLHTCGRVEAYLYNASEEEINSVTLRYRRYAESIRVVRGVEAARHLFRVAAGLESMLIGETDILGQVEEAFDRQVKAGFTKGLLKTIVERAIRAGKRVRAETGISRGPAGLGSLSIIYVSQLLDLTKSKVAVLGAGAVGAGLAKELAERGVAKLYILNRTLEKAVEIANKLGAEARPLTREEVQKCLMECDVVFSSVHSLEYVIDRVPDGAVVKIIVDLGVPQTVAPGLPVRVVRLSDLKQLAEKYSEARKQEAARAEAIVEEELAKLPQILARRYIEEAVSHLLEKAMEVAEEEGKRAGCPTAVLAARTTVKRTLFPIIEVLKKMAEDGRLEDAVKVVEILRSQKPLLRQSEE.

Residues 47–50, S98, 103–105, and Q109 each bind substrate; these read TCGR and ETD. The active-site Nucleophile is C48. Residue 177–182 participates in NADP(+) binding; sequence GAGAVG.

It belongs to the glutamyl-tRNA reductase family. Homodimer.

The catalysed reaction is (S)-4-amino-5-oxopentanoate + tRNA(Glu) + NADP(+) = L-glutamyl-tRNA(Glu) + NADPH + H(+). Its pathway is porphyrin-containing compound metabolism; protoporphyrin-IX biosynthesis; 5-aminolevulinate from L-glutamyl-tRNA(Glu): step 1/2. Catalyzes the NADPH-dependent reduction of glutamyl-tRNA(Glu) to glutamate 1-semialdehyde (GSA). This is Glutamyl-tRNA reductase from Pyrobaculum aerophilum (strain ATCC 51768 / DSM 7523 / JCM 9630 / CIP 104966 / NBRC 100827 / IM2).